The chain runs to 482 residues: Proline--tRNA ligase (482 aa).

The protein belongs to the class-II aminoacyl-tRNA synthetase family. ProS type 3 subfamily. Homodimer.

It localises to the cytoplasm. It carries out the reaction tRNA(Pro) + L-proline + ATP = L-prolyl-tRNA(Pro) + AMP + diphosphate. Functionally, catalyzes the attachment of proline to tRNA(Pro) in a two-step reaction: proline is first activated by ATP to form Pro-AMP and then transferred to the acceptor end of tRNA(Pro). The protein is Proline--tRNA ligase of Natronomonas pharaonis (strain ATCC 35678 / DSM 2160 / CIP 103997 / JCM 8858 / NBRC 14720 / NCIMB 2260 / Gabara) (Halobacterium pharaonis).